A 199-amino-acid chain; its full sequence is Crossover junction endodeoxyribonuclease RuvC (199 aa).

Active-site residues include Asp7, Glu68, and Asp141. Mg(2+) is bound by residues Asp7, Glu68, and Asp141.

Belongs to the RuvC family. In terms of assembly, homodimer which binds Holliday junction (HJ) DNA. The HJ becomes 2-fold symmetrical on binding to RuvC with unstacked arms; it has a different conformation from HJ DNA in complex with RuvA. In the full resolvosome a probable DNA-RuvA(4)-RuvB(12)-RuvC(2) complex forms which resolves the HJ. The cofactor is Mg(2+).

The protein resides in the cytoplasm. The catalysed reaction is Endonucleolytic cleavage at a junction such as a reciprocal single-stranded crossover between two homologous DNA duplexes (Holliday junction).. Its function is as follows. The RuvA-RuvB-RuvC complex processes Holliday junction (HJ) DNA during genetic recombination and DNA repair. Endonuclease that resolves HJ intermediates. Cleaves cruciform DNA by making single-stranded nicks across the HJ at symmetrical positions within the homologous arms, yielding a 5'-phosphate and a 3'-hydroxyl group; requires a central core of homology in the junction. The consensus cleavage sequence is 5'-(A/T)TT(C/G)-3'. Cleavage occurs on the 3'-side of the TT dinucleotide at the point of strand exchange. HJ branch migration catalyzed by RuvA-RuvB allows RuvC to scan DNA until it finds its consensus sequence, where it cleaves and resolves the cruciform DNA. The chain is Crossover junction endodeoxyribonuclease RuvC from Saccharopolyspora erythraea (strain ATCC 11635 / DSM 40517 / JCM 4748 / NBRC 13426 / NCIMB 8594 / NRRL 2338).